The primary structure comprises 145 residues: Actin-depolymerizing factor 11 (145 aa).

Positions 11–145 (SSGIGVAAEC…DIELLRERAH (135 aa)) constitute an ADF-H domain.

Belongs to the actin-binding proteins ADF family.

In terms of biological role, actin-depolymerizing protein. Severs actin filaments (F-actin) and binds to actin monomers. The chain is Actin-depolymerizing factor 11 (ADF11) from Oryza sativa subsp. japonica (Rice).